We begin with the raw amino-acid sequence, 275 residues long: Formamidopyrimidine-DNA glycosylase (275 aa).

Pro-2 functions as the Schiff-base intermediate with DNA in the catalytic mechanism. The Proton donor role is filled by Glu-3. The active-site Proton donor; for beta-elimination activity is the Lys-59. 3 residues coordinate DNA: His-92, Arg-111, and Arg-155. The FPG-type zinc finger occupies Asn-240 to Arg-274. Arg-264 serves as the catalytic Proton donor; for delta-elimination activity.

The protein belongs to the FPG family. Monomer. Zn(2+) serves as cofactor.

It catalyses the reaction Hydrolysis of DNA containing ring-opened 7-methylguanine residues, releasing 2,6-diamino-4-hydroxy-5-(N-methyl)formamidopyrimidine.. It carries out the reaction 2'-deoxyribonucleotide-(2'-deoxyribose 5'-phosphate)-2'-deoxyribonucleotide-DNA = a 3'-end 2'-deoxyribonucleotide-(2,3-dehydro-2,3-deoxyribose 5'-phosphate)-DNA + a 5'-end 5'-phospho-2'-deoxyribonucleoside-DNA + H(+). In terms of biological role, involved in base excision repair of DNA damaged by oxidation or by mutagenic agents. Acts as a DNA glycosylase that recognizes and removes damaged bases. Has a preference for oxidized purines, such as 7,8-dihydro-8-oxoguanine (8-oxoG). Has AP (apurinic/apyrimidinic) lyase activity and introduces nicks in the DNA strand. Cleaves the DNA backbone by beta-delta elimination to generate a single-strand break at the site of the removed base with both 3'- and 5'-phosphates. This chain is Formamidopyrimidine-DNA glycosylase, found in Magnetococcus marinus (strain ATCC BAA-1437 / JCM 17883 / MC-1).